The sequence spans 160 residues: Cyclic pyranopterin monophosphate synthase (160 aa).

Substrate contacts are provided by residues Leu-76–His-78 and Met-114–Glu-115. Asp-129 is an active-site residue.

Belongs to the MoaC family. In terms of assembly, homohexamer; trimer of dimers.

The enzyme catalyses (8S)-3',8-cyclo-7,8-dihydroguanosine 5'-triphosphate = cyclic pyranopterin phosphate + diphosphate. The protein operates within cofactor biosynthesis; molybdopterin biosynthesis. Catalyzes the conversion of (8S)-3',8-cyclo-7,8-dihydroguanosine 5'-triphosphate to cyclic pyranopterin monophosphate (cPMP). In Saccharophagus degradans (strain 2-40 / ATCC 43961 / DSM 17024), this protein is Cyclic pyranopterin monophosphate synthase.